Reading from the N-terminus, the 97-residue chain is Large ribosomal subunit protein uL23 (97 aa).

This sequence belongs to the universal ribosomal protein uL23 family. Part of the 50S ribosomal subunit. Contacts protein L29, and trigger factor when it is bound to the ribosome.

In terms of biological role, one of the early assembly proteins it binds 23S rRNA. One of the proteins that surrounds the polypeptide exit tunnel on the outside of the ribosome. Forms the main docking site for trigger factor binding to the ribosome. This chain is Large ribosomal subunit protein uL23, found in Brucella melitensis biotype 2 (strain ATCC 23457).